Here is a 295-residue protein sequence, read N- to C-terminus: GATA zinc finger domain-containing protein 23 (295 aa).

Positions alanine 115–valine 126 are enriched in low complexity. The disordered stretch occupies residues alanine 115–proline 240. Positions isoleucine 127–leucine 145 are enriched in polar residues. Low complexity predominate over residues threonine 146–lysine 163. Over residues arginine 164 to lysine 174 the composition is skewed to basic residues. The segment covering serine 181–glutamate 227 has biased composition (low complexity). The a.T hook DNA-binding region spans threonine 229 to aspartate 241. The GATA-type zinc finger occupies cysteine 243–cysteine 270.

This Dictyostelium discoideum (Social amoeba) protein is GATA zinc finger domain-containing protein 23 (gtaW).